Consider the following 381-residue polypeptide: UDP-N-acetylglucosamine--N-acetylmuramyl-(pentapeptide) pyrophosphoryl-undecaprenol N-acetylglucosamine transferase (381 aa).

UDP-N-acetyl-alpha-D-glucosamine contacts are provided by residues 10 to 12, N124, R165, S190, I245, and Q290; that span reads TGG. Residues 361–381 are disordered; it reads WGSPAGQERPGHGPVRPPDLA.

This sequence belongs to the glycosyltransferase 28 family. MurG subfamily.

Its subcellular location is the cell inner membrane. It catalyses the reaction di-trans,octa-cis-undecaprenyl diphospho-N-acetyl-alpha-D-muramoyl-L-alanyl-D-glutamyl-meso-2,6-diaminopimeloyl-D-alanyl-D-alanine + UDP-N-acetyl-alpha-D-glucosamine = di-trans,octa-cis-undecaprenyl diphospho-[N-acetyl-alpha-D-glucosaminyl-(1-&gt;4)]-N-acetyl-alpha-D-muramoyl-L-alanyl-D-glutamyl-meso-2,6-diaminopimeloyl-D-alanyl-D-alanine + UDP + H(+). It participates in cell wall biogenesis; peptidoglycan biosynthesis. Its function is as follows. Cell wall formation. Catalyzes the transfer of a GlcNAc subunit on undecaprenyl-pyrophosphoryl-MurNAc-pentapeptide (lipid intermediate I) to form undecaprenyl-pyrophosphoryl-MurNAc-(pentapeptide)GlcNAc (lipid intermediate II). In Anaeromyxobacter sp. (strain Fw109-5), this protein is UDP-N-acetylglucosamine--N-acetylmuramyl-(pentapeptide) pyrophosphoryl-undecaprenol N-acetylglucosamine transferase.